A 686-amino-acid polypeptide reads, in one-letter code: DNA ligase 1 (686 aa).

Residues D35–D39, S84–L85, and E119 contribute to the NAD(+) site. Catalysis depends on K121, which acts as the N6-AMP-lysine intermediate. Positions 142, 177, 293, and 317 each coordinate NAD(+). Residues C411, C414, C429, and C434 each contribute to the Zn(2+) site. The BRCT domain occupies R602–P686.

The protein belongs to the NAD-dependent DNA ligase family. LigA subfamily. The cofactor is Mg(2+). Mn(2+) serves as cofactor.

It carries out the reaction NAD(+) + (deoxyribonucleotide)n-3'-hydroxyl + 5'-phospho-(deoxyribonucleotide)m = (deoxyribonucleotide)n+m + AMP + beta-nicotinamide D-nucleotide.. DNA ligase that catalyzes the formation of phosphodiester linkages between 5'-phosphoryl and 3'-hydroxyl groups in double-stranded DNA using NAD as a coenzyme and as the energy source for the reaction. It is essential for DNA replication and repair of damaged DNA. In Deinococcus deserti (strain DSM 17065 / CIP 109153 / LMG 22923 / VCD115), this protein is DNA ligase 1.